Consider the following 335-residue polypeptide: Anthranilate phosphoribosyltransferase (335 aa).

Residues Gly-79, 82–83 (GD), Ser-87, 89–92 (NIST), 107–115 (KHGNRSITS), and Ser-119 contribute to the 5-phospho-alpha-D-ribose 1-diphosphate site. Gly-79 lines the anthranilate pocket. A Mg(2+)-binding site is contributed by Ser-91. An anthranilate-binding site is contributed by Asn-110. An anthranilate-binding site is contributed by Arg-165. Positions 224 and 225 each coordinate Mg(2+).

Belongs to the anthranilate phosphoribosyltransferase family. As to quaternary structure, homodimer. Mg(2+) is required as a cofactor.

It carries out the reaction N-(5-phospho-beta-D-ribosyl)anthranilate + diphosphate = 5-phospho-alpha-D-ribose 1-diphosphate + anthranilate. It participates in amino-acid biosynthesis; L-tryptophan biosynthesis; L-tryptophan from chorismate: step 2/5. Functionally, catalyzes the transfer of the phosphoribosyl group of 5-phosphorylribose-1-pyrophosphate (PRPP) to anthranilate to yield N-(5'-phosphoribosyl)-anthranilate (PRA). This is Anthranilate phosphoribosyltransferase from Lactococcus lactis subsp. cremoris (strain SK11).